Reading from the N-terminus, the 294-residue chain is Homoserine kinase (294 aa).

83 to 93 (RPKSGLGSSGA) contacts ATP.

The protein belongs to the GHMP kinase family. Homoserine kinase subfamily.

It localises to the cytoplasm. The enzyme catalyses L-homoserine + ATP = O-phospho-L-homoserine + ADP + H(+). Its pathway is amino-acid biosynthesis; L-threonine biosynthesis; L-threonine from L-aspartate: step 4/5. Its function is as follows. Catalyzes the ATP-dependent phosphorylation of L-homoserine to L-homoserine phosphate. This is Homoserine kinase from Pyrococcus abyssi (strain GE5 / Orsay).